We begin with the raw amino-acid sequence, 488 residues long: Probable cytosol aminopeptidase (488 aa).

Residues Lys-251 and Asp-256 each coordinate Mn(2+). Lys-263 is a catalytic residue. Asp-274, Asp-333, and Glu-335 together coordinate Mn(2+). Residue Arg-337 is part of the active site.

Belongs to the peptidase M17 family. Mn(2+) is required as a cofactor.

It localises to the cytoplasm. It catalyses the reaction Release of an N-terminal amino acid, Xaa-|-Yaa-, in which Xaa is preferably Leu, but may be other amino acids including Pro although not Arg or Lys, and Yaa may be Pro. Amino acid amides and methyl esters are also readily hydrolyzed, but rates on arylamides are exceedingly low.. The catalysed reaction is Release of an N-terminal amino acid, preferentially leucine, but not glutamic or aspartic acids.. Functionally, presumably involved in the processing and regular turnover of intracellular proteins. Catalyzes the removal of unsubstituted N-terminal amino acids from various peptides. The protein is Probable cytosol aminopeptidase of Cenarchaeum symbiosum (strain A).